Consider the following 123-residue polypeptide: Small ribosomal subunit protein uS13 (123 aa).

A disordered region spans residues 95–123; that stretch reads GLPVRGQKTKTNARTRKGPKKAVASKKKK.

This sequence belongs to the universal ribosomal protein uS13 family. Part of the 30S ribosomal subunit. Forms a loose heterodimer with protein S19. Forms two bridges to the 50S subunit in the 70S ribosome.

In terms of biological role, located at the top of the head of the 30S subunit, it contacts several helices of the 16S rRNA. In the 70S ribosome it contacts the 23S rRNA (bridge B1a) and protein L5 of the 50S subunit (bridge B1b), connecting the 2 subunits; these bridges are implicated in subunit movement. Contacts the tRNAs in the A and P-sites. This chain is Small ribosomal subunit protein uS13, found in Clostridium acetobutylicum (strain ATCC 824 / DSM 792 / JCM 1419 / IAM 19013 / LMG 5710 / NBRC 13948 / NRRL B-527 / VKM B-1787 / 2291 / W).